The primary structure comprises 53 residues: Conotoxin Vc5.3 (53 aa).

Residues 1–15 form the signal peptide; sequence VILLLLTASAPSVDA. The propeptide occupies 16 to 41; the sequence is RPKTEDVPLSSFRDNTKSTLQRLLKR.

Belongs to the conotoxin T superfamily. Contains 2 disulfide bonds that can be either 'C1-C3, C2-C4' or 'C1-C4, C2-C3', since these disulfide connectivities have been observed for conotoxins with cysteine framework V (for examples, see AC P0DQQ7 and AC P81755). Expressed by the venom duct.

The protein localises to the secreted. This chain is Conotoxin Vc5.3, found in Conus victoriae (Queen Victoria cone).